The primary structure comprises 290 residues: Ribosomal RNA small subunit methyltransferase A (290 aa).

Residues Asn-28, Leu-30, Gly-55, Glu-76, Asp-102, and Asn-126 each contribute to the S-adenosyl-L-methionine site.

The protein belongs to the class I-like SAM-binding methyltransferase superfamily. rRNA adenine N(6)-methyltransferase family. RsmA subfamily.

It is found in the cytoplasm. The catalysed reaction is adenosine(1518)/adenosine(1519) in 16S rRNA + 4 S-adenosyl-L-methionine = N(6)-dimethyladenosine(1518)/N(6)-dimethyladenosine(1519) in 16S rRNA + 4 S-adenosyl-L-homocysteine + 4 H(+). Functionally, specifically dimethylates two adjacent adenosines (A1518 and A1519) in the loop of a conserved hairpin near the 3'-end of 16S rRNA in the 30S particle. May play a critical role in biogenesis of 30S subunits. This Lachnoclostridium phytofermentans (strain ATCC 700394 / DSM 18823 / ISDg) (Clostridium phytofermentans) protein is Ribosomal RNA small subunit methyltransferase A.